Reading from the N-terminus, the 216-residue chain is NADH dehydrogenase [ubiquinone] iron-sulfur protein 7, mitochondrial (216 aa).

The transit peptide at M1–S37 directs the protein to the mitochondrion. Residues C91 and C92 each contribute to the [4Fe-4S] cluster site. R114 is modified (hydroxyarginine). [4Fe-4S] cluster contacts are provided by C156 and C186.

Belongs to the complex I 20 kDa subunit family. In terms of assembly, core subunit of respiratory chain NADH dehydrogenase (Complex I) which is composed of 45 different subunits. This is a component of the iron-sulfur (IP) fragment of the enzyme. [4Fe-4S] cluster serves as cofactor. Post-translationally, hydroxylated ar Arg-114 by NDUFAF5 early in the pathway of assembly of complex I, before the formation of the juncture between peripheral and membrane arms.

It is found in the mitochondrion inner membrane. The catalysed reaction is a ubiquinone + NADH + 5 H(+)(in) = a ubiquinol + NAD(+) + 4 H(+)(out). Core subunit of the mitochondrial membrane respiratory chain NADH dehydrogenase (Complex I) which catalyzes electron transfer from NADH through the respiratory chain, using ubiquinone as an electron acceptor. Essential for the catalytic activity of complex I. The sequence is that of NADH dehydrogenase [ubiquinone] iron-sulfur protein 7, mitochondrial (NDUFS7) from Bos taurus (Bovine).